A 92-amino-acid polypeptide reads, in one-letter code: Beta-2-microglobulin (92 aa).

Residues 2–91 (PQIQVYTRHP…VSMKEPKTVN (90 aa)) enclose the Ig-like C1-type domain. The cysteines at positions 22 and 77 are disulfide-linked.

The protein belongs to the beta-2-microglobulin family. As to quaternary structure, heterodimer of an alpha chain and a beta chain. Beta-2-microglobulin is the beta-chain of major histocompatibility complex class I molecules.

The protein localises to the secreted. In terms of biological role, component of the class I major histocompatibility complex (MHC). Involved in the presentation of peptide antigens to the immune system. The chain is Beta-2-microglobulin (B2m) from Mus caroli (Ryukyu mouse).